Here is a 1647-residue protein sequence, read N- to C-terminus: Ras GTPase-activating-like protein IQG1 (1647 aa).

Residues 18-51 (DTTATTTTTTTSNVLQPSNRLNSPTKFNRKSLDN) are disordered. Residues 19–28 (TTATTTTTTT) show a composition bias toward low complexity. Polar residues predominate over residues 29–43 (SNVLQPSNRLNSPTK). Position 48 is a phosphoserine (Ser-48). 3 positions are modified to phosphothreonine: Thr-66, Thr-72, and Thr-82. 3 positions are modified to phosphoserine: Ser-83, Ser-91, and Ser-139. The segment covering 143–162 (FNTQSNVHTPLKQLNQPIGT) has biased composition (polar residues). Residues 143–175 (FNTQSNVHTPLKQLNQPIGTPSSSSLSPAKNAS) are disordered. Over residues 163–175 (PSSSSLSPAKNAS) the composition is skewed to low complexity. A phosphoserine mark is found at Ser-165, Ser-167, and Ser-169. One can recognise a Calponin-homology (CH) domain in the interval 184-291 (LCRIEAIKQW…FCLHALSYIL (108 aa)). Positions 326 to 427 (PLPNFSSADT…STSNAKLELH (102 aa)) are disordered. The segment covering 342-355 (TSNNNSSTTSATAA) has biased composition (low complexity). At Thr-367 the chain carries Phosphothreonine. Low complexity predominate over residues 368–379 (PSPLKRPQQLQK). Ser-369 carries the post-translational modification Phosphoserine. Composition is skewed to basic and acidic residues over residues 380–392 (KQLE…KPEL) and 402–413 (ISRDDPFTDRVD). Residues Ser-433 and Ser-440 each carry the phosphoserine modification. 9 IQ domains span residues 467–478 (FQSLARGAVFRY), 528–539 (LQSIIRKNFVIN), 556–567 (LQSLIRGKLTRD), 586–597 (FQSLVRMKSIYS), 616–627 (LQSIARSQLYHR), 642–653 (IQSIIRRNAVIE), 672–683 (LQSIARGGVART), 734–745 (VQTLFRGVLSRY), and 764–775 (LQSVARGKLMRG). Positions 841–919 (LSDLKDLIIE…KKIELWQTLF (79 aa)) form a coiled coil. Residues 958-1223 (PVRDSSITYH…DTVKSIISQA (266 aa)) form the Ras-GAP domain. Residues Ser-1064, Ser-1068, Ser-1088, Ser-1383, and Ser-1385 each carry the phosphoserine modification.

Interacts with myosin MYO1 and its light chain MLC1. Interacts with BNI1. Interacts with BNR1. Interacts with CLB2. Interacts with CLB4. Interacts with CDC28. Hyperphosphorylated. Phosphorylation is cell cycle-dependent and peaks at the time of cytokinesis. Contains 21 consensus sites for cyclin-dependent kinases (CDKs). At least some of them are phosphorylated by the CLB2-CDC28 kinase complex. Mutation of 15 of the phosphorylation sites to Ala caused both premature assembly and delayed disassembly of the actomyosin ring, blocked interaction with the actin-nucleating proteins BNI1 and BNR1, and resulted in defects in cytokinesis.

The protein resides in the bud neck. In terms of biological role, required for the assembly and the contraction of the actomyosin ring at the bud neck during cytokinesis. The chain is Ras GTPase-activating-like protein IQG1 (IQG1) from Candida albicans (strain SC5314 / ATCC MYA-2876) (Yeast).